A 152-amino-acid polypeptide reads, in one-letter code: Nucleoside diphosphate kinase (152 aa).

ATP contacts are provided by lysine 11, phenylalanine 59, arginine 87, threonine 93, arginine 104, and asparagine 114. Histidine 117 (pros-phosphohistidine intermediate) is an active-site residue.

It belongs to the NDK family. In terms of assembly, homotetramer. Requires Mg(2+) as cofactor.

The protein localises to the cytoplasm. The enzyme catalyses dZDP + ATP = dZTP + ADP. It carries out the reaction a 2'-deoxyribonucleoside 5'-diphosphate + ATP = a 2'-deoxyribonucleoside 5'-triphosphate + ADP. The catalysed reaction is a ribonucleoside 5'-diphosphate + ATP = a ribonucleoside 5'-triphosphate + ADP. It functions in the pathway purine metabolism. Functionally, major role in the synthesis of nucleoside triphosphates other than ATP. The ATP gamma phosphate is transferred to the NDP beta phosphate via a ping-pong mechanism, using a phosphorylated active-site intermediate. (Microbial infection) Catalyzes the phosphorylation of dZDP to dZTP, when the bacterium is infected by a phage that produces the substrate for the synthesis of dZTP (2- amino-2'-deoxyadenosine 5'-triphosphate), which is then used by the phage as a DNA polymerase substrate. This is Nucleoside diphosphate kinase from Synechococcus sp. (strain CC9311).